The primary structure comprises 647 residues: Exoribonuclease 2 (647 aa).

One can recognise an RNB domain in the interval 192 to 520; the sequence is REDLTALSFV…NHRLLKAIIS (329 aa). Residues 565–647 form the S1 motif domain; that stretch reads ESTFNAEIID…ETRNIVARPI (83 aa).

The protein belongs to the RNR ribonuclease family. RNase II subfamily.

Its subcellular location is the cytoplasm. The enzyme catalyses Exonucleolytic cleavage in the 3'- to 5'-direction to yield nucleoside 5'-phosphates.. Involved in mRNA degradation. Hydrolyzes single-stranded polyribonucleotides processively in the 3' to 5' direction. The chain is Exoribonuclease 2 from Proteus mirabilis (strain HI4320).